Here is a 50-residue protein sequence, read N- to C-terminus: Large ribosomal subunit protein bL33 (50 aa).

It belongs to the bacterial ribosomal protein bL33 family.

The chain is Large ribosomal subunit protein bL33 from Citrifermentans bemidjiense (strain ATCC BAA-1014 / DSM 16622 / JCM 12645 / Bem) (Geobacter bemidjiensis).